A 205-amino-acid chain; its full sequence is Small ribosomal subunit protein uS4 (205 aa).

Basic residues predominate over residues 1-12 (MSKRIQAKHKLD). Positions 1–49 (MSKRIQAKHKLDRRMGQNIWGRPKSPVNRREYGPGQHGQRRKGKMSDFG) are disordered. The region spanning 94–155 (RRLDAVVYRA…SSRQLEIVIV (62 aa)) is the S4 RNA-binding domain.

This sequence belongs to the universal ribosomal protein uS4 family. Part of the 30S ribosomal subunit. Contacts protein S5. The interaction surface between S4 and S5 is involved in control of translational fidelity.

One of the primary rRNA binding proteins, it binds directly to 16S rRNA where it nucleates assembly of the body of the 30S subunit. In terms of biological role, with S5 and S12 plays an important role in translational accuracy. This is Small ribosomal subunit protein uS4 from Methylobacterium radiotolerans (strain ATCC 27329 / DSM 1819 / JCM 2831 / NBRC 15690 / NCIMB 10815 / 0-1).